Reading from the N-terminus, the 196-residue chain is MLEKEEIVSPNLEELKSHYHSIITLLGEDAGREGLLKTPERVAKAMLSLTKGYHMDPHEVLRSAKFQEEYSQMVIVKDIDFFSLCEHHMLPFYGKAHVAYIPNGYITGLSKIARVVDIFSHRLQVQERMTLQIKDCIQETLNPLGVMVVVEAKHMCMQMRGVEKQNSITTTSDFTGAFNQAKTREEFMNLIQHGRV.

Cys-85, His-88, and Cys-156 together coordinate Zn(2+).

Belongs to the GTP cyclohydrolase I family. In terms of assembly, toroid-shaped homodecamer, composed of two pentamers of five dimers.

It catalyses the reaction GTP + H2O = 7,8-dihydroneopterin 3'-triphosphate + formate + H(+). Its pathway is cofactor biosynthesis; 7,8-dihydroneopterin triphosphate biosynthesis; 7,8-dihydroneopterin triphosphate from GTP: step 1/1. The chain is GTP cyclohydrolase 1 from Bacteroides thetaiotaomicron (strain ATCC 29148 / DSM 2079 / JCM 5827 / CCUG 10774 / NCTC 10582 / VPI-5482 / E50).